The sequence spans 293 residues: MKFENDNEKQVFDKLSRSLGNIIETKCDGYDELYGHKICKEIGSADEVQQYYNEDIAQSLLFKLCKAYQFNYDEIVTHLVKILKWRKKFNPLSCAFKETHNKELEDVGILTWYPEEEPNKRVVTWNLYGKLVKKKELFKDVQKFLRYRIGLMEKGIQLLNFQDEENCYMTQVHDYKTVSVWRMDSDMKSCVKEVINTFQTYYPELLYAKYFVNVPSVFAWAYDIIKTFVDENTRKKFVVLNDGKKLGKYLKQCPGDQFGGSSKSTIFEQNVKKVKPTAYASYLLERQEIEDVE.

Residues 100–266 (HNKELEDVGI…QFGGSSKSTI (167 aa)) enclose the CRAL-TRIO domain. Heme contacts are provided by Tyr-128, Arg-148, His-173, Tyr-175, and Lys-209.

This sequence belongs to the SFH5 family. It depends on heme b as a cofactor.

It localises to the cytoplasm. The protein localises to the endoplasmic reticulum membrane. The protein resides in the microsome membrane. The enzyme catalyses a 1,2-diacyl-sn-glycero-3-phospho-(1D-myo-inositol)(in) = a 1,2-diacyl-sn-glycero-3-phospho-(1D-myo-inositol)(out). Non-classical phosphatidylinositol (PtdIns) transfer protein (PITP), which exhibits PtdIns-binding/transfer activity in the absence of detectable PtdCho-binding/transfer activity. Regulates PtdIns(4,5)P2 homeostasis at the plasma membrane. Heme-binding protein that may play a role in organic oxidant-induced stress responses. The sequence is that of Phosphatidylinositol transfer protein SFH5 (SFH5) from Candida glabrata (strain ATCC 2001 / BCRC 20586 / JCM 3761 / NBRC 0622 / NRRL Y-65 / CBS 138) (Yeast).